The sequence spans 124 residues: MATVNQLVRKPRAPKVEKTNVPALNACPQKRGVCTRVYTTTPKKPNSALRKVARVRLTNGFEVTSYIGGEGHNLQEHSVILIRGGRVKDLPGVRYHTVRGALDCAGVNTRRQGRSKYGAKRPKS.

At aspartate 89 the chain carries 3-methylthioaspartic acid.

The protein belongs to the universal ribosomal protein uS12 family. Part of the 30S ribosomal subunit. Contacts proteins S8 and S17. May interact with IF1 in the 30S initiation complex.

In terms of biological role, with S4 and S5 plays an important role in translational accuracy. Interacts with and stabilizes bases of the 16S rRNA that are involved in tRNA selection in the A site and with the mRNA backbone. Located at the interface of the 30S and 50S subunits, it traverses the body of the 30S subunit contacting proteins on the other side and probably holding the rRNA structure together. The combined cluster of proteins S8, S12 and S17 appears to hold together the shoulder and platform of the 30S subunit. In Shewanella denitrificans (strain OS217 / ATCC BAA-1090 / DSM 15013), this protein is Small ribosomal subunit protein uS12.